Here is a 339-residue protein sequence, read N- to C-terminus: Ketol-acid reductoisomerase (NADP(+)) (339 aa).

The region spanning 1-182 is the KARI N-terminal Rossmann domain; that stretch reads MRVYYDRDAD…GGGRAGIIET (182 aa). Residues 24 to 27, R48, S51, S53, and 83 to 86 contribute to the NADP(+) site; these read YGSQ and DELQ. Residue H108 is part of the active site. Residue G134 participates in NADP(+) binding. Positions 183 to 328 constitute a KARI C-terminal knotted domain; sequence TFKEECETDL…EKLREMMPWI (146 aa). The Mg(2+) site is built by D191, E195, E227, and E231. Residue S252 coordinates substrate.

This sequence belongs to the ketol-acid reductoisomerase family. Mg(2+) serves as cofactor.

It carries out the reaction (2R)-2,3-dihydroxy-3-methylbutanoate + NADP(+) = (2S)-2-acetolactate + NADPH + H(+). The catalysed reaction is (2R,3R)-2,3-dihydroxy-3-methylpentanoate + NADP(+) = (S)-2-ethyl-2-hydroxy-3-oxobutanoate + NADPH + H(+). It participates in amino-acid biosynthesis; L-isoleucine biosynthesis; L-isoleucine from 2-oxobutanoate: step 2/4. The protein operates within amino-acid biosynthesis; L-valine biosynthesis; L-valine from pyruvate: step 2/4. In terms of biological role, involved in the biosynthesis of branched-chain amino acids (BCAA). Catalyzes an alkyl-migration followed by a ketol-acid reduction of (S)-2-acetolactate (S2AL) to yield (R)-2,3-dihydroxy-isovalerate. In the isomerase reaction, S2AL is rearranged via a Mg-dependent methyl migration to produce 3-hydroxy-3-methyl-2-ketobutyrate (HMKB). In the reductase reaction, this 2-ketoacid undergoes a metal-dependent reduction by NADPH to yield (R)-2,3-dihydroxy-isovalerate. In Azorhizobium caulinodans (strain ATCC 43989 / DSM 5975 / JCM 20966 / LMG 6465 / NBRC 14845 / NCIMB 13405 / ORS 571), this protein is Ketol-acid reductoisomerase (NADP(+)).